The primary structure comprises 290 residues: Pantothenate synthetase (290 aa).

Position 30–37 (30–37) interacts with ATP; it reads MGALHEGH. The active-site Proton donor is the histidine 37. (R)-pantoate is bound at residue glutamine 61. Glutamine 61 is a binding site for beta-alanine. ATP is bound at residue 147–150; sequence GEKD. Glutamine 153 is a binding site for (R)-pantoate. ATP-binding positions include valine 176 and 184–187; that span reads KSSR.

It belongs to the pantothenate synthetase family. As to quaternary structure, homodimer.

It localises to the cytoplasm. The catalysed reaction is (R)-pantoate + beta-alanine + ATP = (R)-pantothenate + AMP + diphosphate + H(+). It participates in cofactor biosynthesis; (R)-pantothenate biosynthesis; (R)-pantothenate from (R)-pantoate and beta-alanine: step 1/1. In terms of biological role, catalyzes the condensation of pantoate with beta-alanine in an ATP-dependent reaction via a pantoyl-adenylate intermediate. The sequence is that of Pantothenate synthetase from Chlorobium chlorochromatii (strain CaD3).